The following is a 505-amino-acid chain: MRDPLTDCSYNKVYKNLKEFSQNGEDFCKQITSILQQRANLEINYAKGLQKLATKLSKTLQSAKKNCLVSAWAWVSEGMKSAGDLHQKLGKAIELEAIKPAHQVLSAHEKKRKSLENEVEKTANLVISNWNQQIKAKKKLMVSTKKHEALFHLVESSKQITTEKEKQKLLNKLKKSTEKLSKEDENYYQKNVASCSTRLKWENTLENCFQSILELEKERIQLLCNNLNQYSQHISVFGQTLTTCHTQIHCAISKIDIEKDIQALMEETTVSSTENKSEFLLTDYFEEDPKNAMSKERQTSSIKSKLLRLQKDIEKASRDQEGLERMLRAYSSHSSFSDSESKKSTAALMDENSLKLDLLQANSYKLSSVLAELEQRPQPNHPCSNSIFKWKEKQTHSSVKISRPVLMKRLENVVNRASSDGQRIPSPSSTASGVTQLGNGLCKALYPFQARQDDELDLEKGDIVTIHKKKDEGWWFGSLKGKKGHFPAAYVEELPLNAGDTASQA.

The F-BAR domain maps to 1–260 (MRDPLTDCSY…AISKIDIEKD (260 aa)). Coiled-coil stretches lie at residues 101 to 128 (AHQV…LVIS), 160 to 222 (ITTE…RIQL), and 295 to 332 (KERQ…AYSS). Ser-114 carries the post-translational modification Phosphoserine. Residues 292-372 (AMSKERQTSS…SYKLSSVLAE (81 aa)) enclose the REM-1 domain. An SH3 domain is found at 437-496 (LGNGLCKALYPFQARQDDELDLEKGDIVTIHKKKDEGWWFGSLKGKKGHFPAAYVEELPL). Ser-478 is subject to Phosphoserine.

Homotrimer. Interacts with DAB2. Interacts with NOS3, DNM2, WASL and CAV1. Interacts (via SH3 domain) with DNM2; this interaction allows the recruitment of NOS3 to dynamin-positive structures. In terms of tissue distribution, present in pulmonary arterial endothelial cells (at protein level).

Its subcellular location is the cell membrane. It is found in the cytoplasmic vesicle. The protein localises to the cytoplasm. It localises to the cytoskeleton. Functionally, multivalent adapter protein which may decrease NOS3 activity by inducing its translocation away from the plasma membrane. This chain is Nostrin, found in Bos taurus (Bovine).